Here is a 108-residue protein sequence, read N- to C-terminus: Nucleoid-associated protein GWCH70_0020 (108 aa).

The segment at Met1–Thr34 is disordered. Positions Met9–Lys18 are enriched in low complexity. Residues Met19–Thr34 show a composition bias toward basic and acidic residues.

It belongs to the YbaB/EbfC family. In terms of assembly, homodimer.

The protein localises to the cytoplasm. It localises to the nucleoid. Binds to DNA and alters its conformation. May be involved in regulation of gene expression, nucleoid organization and DNA protection. This is Nucleoid-associated protein GWCH70_0020 from Geobacillus sp. (strain WCH70).